Consider the following 235-residue polypeptide: Small ribosomal subunit protein uS2c (235 aa).

This sequence belongs to the universal ribosomal protein uS2 family.

The protein resides in the plastid. It is found in the chloroplast. The chain is Small ribosomal subunit protein uS2c (rps2) from Marchantia polymorpha (Common liverwort).